The sequence spans 250 residues: Leucyl/phenylalanyl-tRNA--protein transferase (250 aa).

A disordered region spans residues 1 to 21 (MTPFRRPTVLGTSASAPFPPA).

Belongs to the L/F-transferase family.

Its subcellular location is the cytoplasm. It catalyses the reaction N-terminal L-lysyl-[protein] + L-leucyl-tRNA(Leu) = N-terminal L-leucyl-L-lysyl-[protein] + tRNA(Leu) + H(+). The catalysed reaction is N-terminal L-arginyl-[protein] + L-leucyl-tRNA(Leu) = N-terminal L-leucyl-L-arginyl-[protein] + tRNA(Leu) + H(+). It carries out the reaction L-phenylalanyl-tRNA(Phe) + an N-terminal L-alpha-aminoacyl-[protein] = an N-terminal L-phenylalanyl-L-alpha-aminoacyl-[protein] + tRNA(Phe). In terms of biological role, functions in the N-end rule pathway of protein degradation where it conjugates Leu, Phe and, less efficiently, Met from aminoacyl-tRNAs to the N-termini of proteins containing an N-terminal arginine or lysine. The polypeptide is Leucyl/phenylalanyl-tRNA--protein transferase (Xanthomonas euvesicatoria pv. vesicatoria (strain 85-10) (Xanthomonas campestris pv. vesicatoria)).